Reading from the N-terminus, the 163-residue chain is Nucleotide-binding protein YajQ (163 aa).

Belongs to the YajQ family.

In terms of biological role, nucleotide-binding protein. The polypeptide is Nucleotide-binding protein YajQ (Escherichia coli O81 (strain ED1a)).